A 589-amino-acid chain; its full sequence is Putative phospholipase B-like 2 (589 aa).

Positions 1–41 are cleaved as a signal peptide; it reads MVGQMYCYPGSHLARALTRALALALVLALLVGPFLSGLAGA. N-linked (GlcNAc...) asparagine glycosylation is found at asparagine 88 and asparagine 110. Cysteines 142 and 152 form a disulfide. Residues asparagine 231, asparagine 436, and asparagine 465 are each glycosylated (N-linked (GlcNAc...) asparagine). Cysteine 492 and cysteine 495 are joined by a disulfide. A glycan (N-linked (GlcNAc...) asparagine) is linked at asparagine 515.

It belongs to the phospholipase B-like family. As to quaternary structure, interacts with IGF2R. The p76 protein is synthesized as a 80 kDa precursor which is then processed into a N-terminal 32 kDa form and a C-terminal 45 kDa form. In terms of processing, glycosylated; contains mannose 6-phosphate sugars. In terms of tissue distribution, ubiquitously expressed, with highest levels in heart, brain and liver.

It localises to the lysosome lumen. Functionally, putative phospholipase. The polypeptide is Putative phospholipase B-like 2 (PLBD2) (Homo sapiens (Human)).